A 451-amino-acid polypeptide reads, in one-letter code: uncharacterized protein (451 aa).

Residues 1 to 59 (MLHKNDIIETEISDISHEGMGIAKVDGFVFFVENALPGEIIKMRVLKLRKRIGYGKVEE) form the TRAM domain. 4 residues coordinate S-adenosyl-L-methionine: Gln283, Tyr312, Glu333, and Asp381. Cys408 serves as the catalytic Nucleophile.

It belongs to the class I-like SAM-binding methyltransferase superfamily. RNA M5U methyltransferase family.

This is an uncharacterized protein from Streptococcus agalactiae serotype V (strain ATCC BAA-611 / 2603 V/R).